The chain runs to 285 residues: VQ motif-containing protein 20 (285 aa).

Residues 1-10 are compositionally biased toward basic and acidic residues; sequence MSSTYKDNHP. The segment at 1–68 is disordered; it reads MSSTYKDNHP…PSPSSFSSAA (68 aa). Residues 11–23 are compositionally biased toward basic residues; that stretch reads YHHHPHHHHHHPK. The VQ motif lies at 91–100; it reads FMALVQKLTG. Residues 195–218 are disordered; sequence YSAVAIPPQPPPHPPPPPPPPSMY. The segment covering 201–216 has biased composition (pro residues); sequence PPQPPPHPPPPPPPPS.

The protein localises to the nucleus. Functionally, may function as negative regulator of plant defense. The polypeptide is VQ motif-containing protein 20 (Arabidopsis thaliana (Mouse-ear cress)).